Reading from the N-terminus, the 149-residue chain is Ribosomal RNA large subunit methyltransferase H (149 aa).

S-adenosyl-L-methionine is bound by residues leucine 71, glycine 98, and 117-122 (LSKLTL).

It belongs to the RNA methyltransferase RlmH family. Homodimer.

The protein localises to the cytoplasm. The catalysed reaction is pseudouridine(1915) in 23S rRNA + S-adenosyl-L-methionine = N(3)-methylpseudouridine(1915) in 23S rRNA + S-adenosyl-L-homocysteine + H(+). Specifically methylates the pseudouridine at position 1915 (m3Psi1915) in 23S rRNA. This is Ribosomal RNA large subunit methyltransferase H from Campylobacter jejuni subsp. jejuni serotype O:6 (strain 81116 / NCTC 11828).